The chain runs to 129 residues: Small ribosomal subunit protein uS12 (129 aa).

D89 bears the 3-methylthioaspartic acid mark. The segment at 110–129 (RKQGRSRYGAPRKQVVATKK) is disordered.

Belongs to the universal ribosomal protein uS12 family. In terms of assembly, part of the 30S ribosomal subunit. Contacts proteins S8 and S17. May interact with IF1 in the 30S initiation complex.

With S4 and S5 plays an important role in translational accuracy. Functionally, interacts with and stabilizes bases of the 16S rRNA that are involved in tRNA selection in the A site and with the mRNA backbone. Located at the interface of the 30S and 50S subunits, it traverses the body of the 30S subunit contacting proteins on the other side and probably holding the rRNA structure together. The combined cluster of proteins S8, S12 and S17 appears to hold together the shoulder and platform of the 30S subunit. The sequence is that of Small ribosomal subunit protein uS12 from Rickettsia bellii (strain OSU 85-389).